A 337-amino-acid polypeptide reads, in one-letter code: Inositol 2-dehydrogenase (337 aa).

Belongs to the Gfo/Idh/MocA family. As to quaternary structure, homotetramer.

The enzyme catalyses myo-inositol + NAD(+) = scyllo-inosose + NADH + H(+). In terms of biological role, involved in the oxidation of myo-inositol (MI) to 2-keto-myo-inositol (2KMI or 2-inosose). The sequence is that of Inositol 2-dehydrogenase from Arthrobacter sp. (strain FB24).